A 126-amino-acid chain; its full sequence is Histone H2B type 1-D (126 aa).

A compositionally biased stretch (low complexity) spans 1–12; that stretch reads MPEPTKSAPAPK. A disordered region spans residues 1 to 36; it reads MPEPTKSAPAPKKGSKKAVTKAQKKDGKKRKRSRKE. Proline 2 bears the N-acetylproline mark. At glutamate 3 the chain carries ADP-ribosyl glutamic acid. The residue at position 6 (lysine 6) is an N6-(2-hydroxyisobutyryl)lysine; alternate. Lysine 6 carries the N6-(beta-hydroxybutyryl)lysine; alternate modification. Lysine 6 bears the N6-acetyllysine; alternate mark. Lysine 6 bears the N6-butyryllysine; alternate mark. Lysine 6 bears the N6-crotonyllysine; alternate mark. Lysine 6 bears the N6-lactoyllysine; alternate mark. A Glycyl lysine isopeptide (Lys-Gly) (interchain with G-Cter in SUMO2); alternate cross-link involves residue lysine 6. Position 7 is an ADP-ribosylserine (serine 7). The residue at position 12 (lysine 12) is an N6-(beta-hydroxybutyryl)lysine; alternate. Residues lysine 12 and lysine 13 each carry the N6-acetyllysine; alternate modification. Residues lysine 12 and lysine 13 each carry the N6-crotonyllysine; alternate modification. Lysine 12 is modified (N6-lactoyllysine; alternate). The residue at position 13 (lysine 13) is an N6-(2-hydroxyisobutyryl)lysine; alternate. Serine 15 bears the Phosphoserine; by STK4/MST1 mark. Lysine 16, lysine 17, lysine 21, and lysine 24 each carry N6-acetyllysine; alternate. Residues lysine 16, lysine 17, lysine 21, and lysine 24 each carry the N6-crotonyllysine; alternate modification. Lysine 16, lysine 17, lysine 21, and lysine 24 each carry N6-lactoyllysine; alternate. Residues lysine 17 and lysine 21 each carry the N6-(beta-hydroxybutyryl)lysine; alternate modification. At lysine 17 the chain carries N6-glutaryllysine; alternate. N6-(2-hydroxyisobutyryl)lysine; alternate occurs at positions 21 and 24. Lysine 21 is subject to N6-butyryllysine; alternate. Lysine 21 participates in a covalent cross-link: Glycyl lysine isopeptide (Lys-Gly) (interchain with G-Cter in SUMO2); alternate. An N6-(2-hydroxyisobutyryl)lysine modification is found at lysine 25. An N6-(2-hydroxyisobutyryl)lysine; alternate modification is found at lysine 35. Lysine 35 bears the N6-(beta-hydroxybutyryl)lysine; alternate mark. N6-crotonyllysine; alternate is present on lysine 35. Residue lysine 35 is modified to N6-glutaryllysine; alternate. An N6-succinyllysine; alternate modification is found at lysine 35. Lysine 35 is covalently cross-linked (Glycyl lysine isopeptide (Lys-Gly) (interchain with G-Cter in ubiquitin); alternate). Residue glutamate 36 is modified to PolyADP-ribosyl glutamic acid. Serine 37 is modified (phosphoserine; by AMPK). 3 positions are modified to N6-(2-hydroxyisobutyryl)lysine; alternate: lysine 44, lysine 47, and lysine 58. At lysine 44 the chain carries N6-lactoyllysine; alternate. An N6-glutaryllysine; alternate mark is found at lysine 44 and lysine 47. N6-methyllysine; alternate is present on lysine 47. N6,N6-dimethyllysine; alternate is present on lysine 58. A Dimethylated arginine modification is found at arginine 80. Lysine 86 carries the N6-(2-hydroxyisobutyryl)lysine; alternate modification. Lysine 86 bears the N6-(beta-hydroxybutyryl)lysine; alternate mark. An N6-acetyllysine; alternate modification is found at lysine 86. Lysine 86 bears the N6-lactoyllysine; alternate mark. Residue lysine 86 is modified to N6,N6,N6-trimethyllysine; alternate. Residues arginine 87 and arginine 93 each carry the omega-N-methylarginine modification. Lysine 109 carries the N6-(2-hydroxyisobutyryl)lysine; alternate modification. Lysine 109 is modified (N6-lactoyllysine; alternate). At lysine 109 the chain carries N6-glutaryllysine; alternate. At lysine 109 the chain carries N6-methyllysine; alternate. Serine 113 carries O-linked (GlcNAc) serine glycosylation. Threonine 116 is modified (phosphothreonine). 2 positions are modified to N6-(2-hydroxyisobutyryl)lysine; alternate: lysine 117 and lysine 121. An N6-(beta-hydroxybutyryl)lysine; alternate mark is found at lysine 117 and lysine 121. Residues lysine 117 and lysine 121 each carry the N6-lactoyllysine; alternate modification. Lysine 117 and lysine 121 each carry N6-glutaryllysine; alternate. Lysine 117 and lysine 121 each carry N6-succinyllysine; alternate. N6-malonyllysine; alternate is present on lysine 117. Residue lysine 117 is modified to N6-methylated lysine; alternate. Lysine 121 participates in a covalent cross-link: Glycyl lysine isopeptide (Lys-Gly) (interchain with G-Cter in ubiquitin); alternate.

The protein belongs to the histone H2B family. As to quaternary structure, the nucleosome is a histone octamer containing two molecules each of H2A, H2B, H3 and H4 assembled in one H3-H4 heterotetramer and two H2A-H2B heterodimers. The octamer wraps approximately 147 bp of DNA. Post-translationally, monoubiquitination at Lys-35 (H2BK34Ub) by the MSL1/MSL2 dimer is required for histone H3 'Lys-4' (H3K4me) and 'Lys-79' (H3K79me) methylation and transcription activation at specific gene loci, such as HOXA9 and MEIS1 loci. Similarly, monoubiquitination at Lys-121 (H2BK120Ub) by the RNF20/40 complex gives a specific tag for epigenetic transcriptional activation and is also prerequisite for histone H3 'Lys-4' and 'Lys-79' methylation. It also functions cooperatively with the FACT dimer to stimulate elongation by RNA polymerase II. H2BK120Ub also acts as a regulator of mRNA splicing: deubiquitination by USP49 is required for efficient cotranscriptional splicing of a large set of exons. Phosphorylation at Ser-37 (H2BS36ph) by AMPK in response to stress promotes transcription. Phosphorylated on Ser-15 (H2BS14ph) by STK4/MST1 during apoptosis; which facilitates apoptotic chromatin condensation. Also phosphorylated on Ser-15 in response to DNA double strand breaks (DSBs), and in correlation with somatic hypermutation and immunoglobulin class-switch recombination. In terms of processing, glcNAcylation at Ser-113 promotes monoubiquitination of Lys-121. It fluctuates in response to extracellular glucose, and associates with transcribed genes. Post-translationally, ADP-ribosylated by PARP1 or PARP2 on Ser-7 (H2BS6ADPr) in response to DNA damage. H2BS6ADPr promotes recruitment of CHD1L. Mono-ADP-ribosylated on Glu-3 (H2BE2ADPr) by PARP3 in response to single-strand breaks. Poly ADP-ribosylation on Glu-36 (H2BE35ADPr) by PARP1 regulates adipogenesis: it inhibits phosphorylation at Ser-37 (H2BS36ph), thereby blocking expression of pro-adipogenetic genes. Crotonylation (Kcr) is specifically present in male germ cells and marks testis-specific genes in post-meiotic cells, including X-linked genes that escape sex chromosome inactivation in haploid cells. Crotonylation marks active promoters and enhancers and confers resistance to transcriptional repressors. It is also associated with post-meiotically activated genes on autosomes. In terms of processing, lactylated in macrophages by EP300/P300 by using lactoyl-CoA directly derived from endogenous or exogenous lactate, leading to stimulates gene transcription.

It is found in the nucleus. Its subcellular location is the chromosome. In terms of biological role, core component of nucleosome. Nucleosomes wrap and compact DNA into chromatin, limiting DNA accessibility to the cellular machineries which require DNA as a template. Histones thereby play a central role in transcription regulation, DNA repair, DNA replication and chromosomal stability. DNA accessibility is regulated via a complex set of post-translational modifications of histones, also called histone code, and nucleosome remodeling. This is Histone H2B type 1-D from Homo sapiens (Human).